Here is a 420-residue protein sequence, read N- to C-terminus: Serine hydroxymethyltransferase (420 aa).

(6S)-5,6,7,8-tetrahydrofolate is bound by residues leucine 123 and 127–129 (GHL). Position 232 is an N6-(pyridoxal phosphate)lysine (lysine 232). Residue 357-359 (SPF) coordinates (6S)-5,6,7,8-tetrahydrofolate.

It belongs to the SHMT family. Homodimer. Pyridoxal 5'-phosphate is required as a cofactor.

The protein resides in the cytoplasm. It carries out the reaction (6R)-5,10-methylene-5,6,7,8-tetrahydrofolate + glycine + H2O = (6S)-5,6,7,8-tetrahydrofolate + L-serine. It functions in the pathway one-carbon metabolism; tetrahydrofolate interconversion. Its pathway is amino-acid biosynthesis; glycine biosynthesis; glycine from L-serine: step 1/1. In terms of biological role, catalyzes the reversible interconversion of serine and glycine with tetrahydrofolate (THF) serving as the one-carbon carrier. This reaction serves as the major source of one-carbon groups required for the biosynthesis of purines, thymidylate, methionine, and other important biomolecules. Also exhibits THF-independent aldolase activity toward beta-hydroxyamino acids, producing glycine and aldehydes, via a retro-aldol mechanism. In Streptococcus pyogenes serotype M12 (strain MGAS2096), this protein is Serine hydroxymethyltransferase.